The sequence spans 90 residues: Probable Fe(2+)-trafficking protein (90 aa).

Belongs to the Fe(2+)-trafficking protein family.

In terms of biological role, could be a mediator in iron transactions between iron acquisition and iron-requiring processes, such as synthesis and/or repair of Fe-S clusters in biosynthetic enzymes. The chain is Probable Fe(2+)-trafficking protein from Nitrosomonas eutropha (strain DSM 101675 / C91 / Nm57).